Consider the following 137-residue polypeptide: uncharacterized protein (137 aa).

This is an uncharacterized protein from Bos taurus (Bovine).